We begin with the raw amino-acid sequence, 1693 residues long: Putative stoned B-like protein (1693 aa).

Residues 1-12 (MSWRDRDFDPHG) are compositionally biased toward basic and acidic residues. 7 disordered regions span residues 1 to 54 (MSWR…ELPA), 222 to 322 (NQIP…VEKS), 334 to 371 (TVEITSPDAPHQGAFHDNTPKEPKVVEEEEDDDLPTFS), 383 to 438 (KEMT…DPNA), 585 to 807 (GDYH…TSAA), 841 to 869 (KKMEKLQKKKLKQQGKKAATPTLEPDEED), and 899 to 1024 (PVKE…FVAD). A compositionally biased stretch (low complexity) spans 26–39 (SSSERAASMRAMRS). 2 stretches are compositionally biased toward basic and acidic residues: residues 279–301 (MEDKMEQAEEKARKEEKKEKEET) and 311–322 (TTEKHQNEVEKS). The segment covering 360 to 371 (EEEEDDDLPTFS) has biased composition (acidic residues). Positions 393 to 412 (ENVENEKQEDTHISEGHVEY) are enriched in basic and acidic residues. Polar residues predominate over residues 596-615 (DENSTSAISGYEQNGASTSL). Over residues 632 to 643 (YYQGQEYQQEYY) the composition is skewed to low complexity. A DPF 1 motif is present at residues 684–686 (DPF). A compositionally biased stretch (low complexity) spans 708-722 (SPTPEASSSTGTSAP). Residues 745 to 760 (PPRPPPAARPPPPRPA) show a composition bias toward pro residues. Positions 786–807 (KVSTAVKSTESTLKNLEETSAA) are enriched in polar residues. A compositionally biased stretch (basic and acidic residues) spans 899–913 (PVKEIKKAPEIRRVD). 3 short sequence motifs (DPF) span residues 1006–1008 (DPF), 1024–1026 (DPF), and 1039–1041 (DPF). The tract at residues 1062–1095 (ANAENEDDFYNGRQSPTLSTPTPEGGSPISQQRP) is disordered. Over residues 1073-1095 (GRQSPTLSTPTPEGGSPISQQRP) the composition is skewed to polar residues. Residues 1136–1283 (GWDLMVRHPI…KCKITRTAKP (148 aa)) form the SHD domain. In terms of domain architecture, MHD spans 1287–1606 (QDEVQIHCYD…AKYQYKVEID (320 aa)). The segment at 1633 to 1693 (ELHQPTFNPS…IQIDMKNYGY (61 aa)) is disordered. The segment covering 1637–1651 (PTFNPSTQESDTQQG) has biased composition (polar residues).

Belongs to the Stoned B family.

It localises to the cytoplasm. Potential adapter protein, which may be involved in endocytic vesicle recycling of synaptic vesicles. The chain is Putative stoned B-like protein (unc-41) from Caenorhabditis elegans.